Here is a 409-residue protein sequence, read N- to C-terminus: Failed axon connections homolog (409 aa).

Residues Tyr68–Ile88 traverse the membrane as a helical segment. A disordered region spans residues Asp372–Phe393.

Belongs to the FAX family.

It is found in the membrane. Functionally, may play a role in axonal development. The chain is Failed axon connections homolog (Faxc) from Mus musculus (Mouse).